The sequence spans 724 residues: Protein BCH1 (724 aa).

The segment covering 51–65 (TTATASANDNGATSN) has biased composition (low complexity). Residues 51-71 (TTATASANDNGATSNINGQDP) are disordered. Residues 711–724 (LNFLKNFTNDTFDN) form a CHS5-binding region.

The protein belongs to the CHAPS family. In terms of assembly, component of the CHS5/6 complex composed of the 4 CHAPS proteins BCH1, BCH2, BUD7, and CHS6 as well as at least CHS5 and GTP-bound ARF1. The complex interacts with the cargo protein CHS3.

It is found in the golgi apparatus. The protein localises to the trans-Golgi network membrane. Member of the CHS5-ARF1P-binding proteins (CHAPS) which mediates export of specific cargo proteins, including chitin synthase CHS3. This Saccharomyces cerevisiae (strain ATCC 204508 / S288c) (Baker's yeast) protein is Protein BCH1 (BCH1).